A 7067-amino-acid chain; its full sequence is Replicase polyprotein 1ab (7067 aa).

The CoV Nsp1 globular domain occupies 12-127; it reads THVQLSLPVL…YRNVLLRKNG (116 aa). Positions 148–179 constitute a BetaCoV Nsp1 C-terminal domain; sequence ELGTDPIEDYEQNWNTKHGSGALRELTRELNG. The 274-residue stretch at 183 to 456 folds into the CoV Nsp2 N-terminal domain; sequence TRYVDNNFCG…NEDLLEILNR (274 aa). Residues C200, C231, H234, H236, C323, C326, C341, C344, C370, C373, H382, and C416 each coordinate Zn(2+). The C2H2 stretch occupies residues 200-236; the sequence is CIKDFLARAGKSMCTLSEQLDYIESKRGVYCCREHEH. The interval 323–344 is C4; sequence CNHCDEVSWQTCDFLKATCEQC. A C2HC region spans residues 370–416; it reads CPACQDPEVGPEHSVADYHNHSNIETRLRKGGRTKCFGGCVFSYVGC. The region spanning 458-688 is the CoV Nsp2 middle domain; sequence RVNINIVGDF…LGVVNKALEM (231 aa). One can recognise a CoV Nsp2 C-terminal domain in the interval 690–818; sequence LDQVTIAGTK…TNNVFRLKGG (129 aa). Positions 822–930 constitute a Ubiquitin-like 1 domain; the sequence is KGVTFGEDTV…MYCSFYPPDE (109 aa). Macro domains are found at residues 998–1164, 1201–1329, and 1337–1464; these read VNQF…LDYL, KIKA…LPSE, and VLGT…TSSS. Residues 1466–1532 enclose the DPUP domain; it reads TPEEYFVETT…PLDKLKSLLS (67 aa). The region spanning 1536-1591 is the Ubiquitin-like 2 domain; the sequence is VKTIKVFTTVDNTNLHTHIVDMSMTYGQQFGPTYLDGADVTKIKPHVNHEGKTFFV. Residues 1605–1869 form the Peptidase C16 domain; it reads YYHTIDESFL…YTEIEPKLDG (265 aa). The For PL-PRO activity role is filled by C1645. C1723, C1726, C1758, and C1760 together coordinate Zn(2+). The segment at 1723–1760 adopts a C4-type zinc-finger fold; the sequence is CKHCGQKTTTLKGVEAVMYMGTLSYDELKTGVSIPCVC. Active-site for PL-PRO activity residues include H1806 and D1820. A Nucleic acid-binding domain is found at 1882–1992; sequence PIDLVPTQPM…CLWSTKPVDT (111 aa). Positions 2017–2126 constitute a G2M domain; sequence TTSEEVVENP…LGQTAVITSN (110 aa). The interval 2086–2365 is HD1; it reads LALGLKTLAT…IFFASFYYVW (280 aa). The chain crosses the membrane as a helical span at residues 2197-2217; sequence LFTIVMWLLLLSICLGSLTYV. A 3Ecto domain is found at 2218 to 2288; it reads TAVLGVCLSS…QVTISSYKLD (71 aa). 2 disulfides stabilise this stretch: C2234/C2262 and C2253/C2259. Helical transmembrane passes span 2298–2318 and 2345–2365; these read WLLA…SAIM and MAPV…YYVW. The tract at residues 2366-2456 is Y1; that stretch reads KSYVHIMDGC…QFKRPINPTD (91 aa). In terms of domain architecture, CoV Nsp3 Y spans 2366–2734; sequence KSYVHIMDGC…ITTKISLKGG (369 aa). Positions 2370, 2375, 2380, 2383, 2416, 2419, 2423, and 2426 each coordinate Zn(2+). The segment at 2370 to 2383 is ZF1; sequence HIMDGCTSSTCMMC. Residues 2416 to 2426 form a ZF2 region; it reads CKAHNWNCLNC. Residues 2457 to 2551 form a Y2 region; the sequence is QSAYVVDSVT…LLDQALVSDV (95 aa). The segment at 2457–2734 is coV-Y; that stretch reads QSAYVVDSVT…ITTKISLKGG (278 aa). Positions 2552 to 2633 are Y3; that stretch reads GDSTEVSVKM…ECLKLSHHSD (82 aa). Residues 2634 to 2734 are Y4; that stretch reads IEVTGDSCNN…ITTKISLKGG (101 aa). The next 7 membrane-spanning stretches (helical) occupy residues 2744 to 2764, 2986 to 3006, 3016 to 3036, 3048 to 3068, 3071 to 3091, 3099 to 3119, and 3136 to 3156; these read LLKV…IMPV, PGVF…TPLV, ASVV…YYFM, VVAA…LAPA, FLPG…TNDV, WFAM…VFCI, and VMFN…TFLL. Positions 2749 to 3156 are HD2; it reads LLCVLAALFC…EEAALCTFLL (408 aa). One can recognise a Nsp4C domain in the interval 3136-3234; that stretch reads VMFNGVTFST…QTSITSAVLQ (99 aa). The Peptidase C30 domain occupies 3235–3540; sequence SGFRKMAFPS…VRQCSGVTFQ (306 aa). Active-site for 3CL-PRO activity residues include H3275 and C3379. Transmembrane regions (helical) follow at residues 3558–3578, 3580–3600, 3606–3626, 3652–3672, 3679–3698, 3722–3742, and 3750–3770; these read FLTS…FFVY, NAFL…MLLV, FLCL…MVYM, DCVM…RTVY, VWTL…GNSL, IMFL…LLFI, and IMLV…LFCL. The tract at residues 3558 to 3770 is HD3; the sequence is FLTSLLILVQ…CCCYFGLFCL (213 aa). Residues 3831-3913 form the RdRp Nsp7 cofactor domain; sequence SKMSDVKCTS…EMLDNRATLQ (83 aa). In terms of domain architecture, RdRp Nsp8 cofactor spans 3914 to 4111; the sequence is AIASEFSSLP…LRANSAVKLQ (198 aa). In terms of domain architecture, Nsp9 ssRNA-binding spans 4112–4224; the sequence is NNELSPVALR…GSLAATVRLQ (113 aa). In terms of domain architecture, ExoN/MTase coactivator spans 4225–4363; it reads AGNATEVPAN…CDQLREPMMQ (139 aa). Zn(2+) contacts are provided by C4298, C4301, H4307, C4314, C4341, C4344, C4352, and C4354. 2 zinc fingers span residues 4298-4314 and 4341-4354; these read CLYC…KGFC and CTVC…GCSC. The NiRAN domain maps to 4370–4624; the sequence is FLNRVCGVSA…AAESHMDADL (255 aa). Residues N4572 and D4581 each coordinate Mn(2+). Residues 4629 to 4727 enclose the Nsp12 Interface domain; the sequence is VKWDLLKYDF…HNQDVNLHSS (99 aa). Zn(2+) contacts are provided by H4658, C4664, C4669, C4673, and C4850. A Nsp12 RNA-dependent RNA polymerase domain is found at 4728-5295; sequence RLSFKELLVY…AMYTPHTVLQ (568 aa). Residues 4730–4944 form a rdRp Fingers N-ter region; sequence SFKELLVYAA…HQKLLKSIAA (215 aa). The tract at residues 4945–4983 is rdRp Palm N-ter; sequence TRGATVVIGTSKFYGGWHNMLKTVYSDVESPHLMGWDYP. The RdRp catalytic domain maps to 4975 to 5137; that stretch reads PHLMGWDYPK…CYNSNYAAQG (163 aa). The segment at 4984–5042 is rdRp Fingers C-ter; sequence KCDRAMPNMLRIMASLILARKHSTCCNLSHRFYRLANECAQVLSEMVMCGGSLYVKPGG. Residues H5005, C5008, and C5009 each contribute to the Zn(2+) site. Residues 5043–5178 are rdRp Palm C-ter; the sequence is TSSGDATTAY…TRGPHEFCSQ (136 aa). Active-site residues include S5122, D5123, and D5124. The segment at 5179-5295 is rdRp Thumb; that stretch reads HTMLVKQGDD…AMYTPHTVLQ (117 aa). In terms of domain architecture, CV ZBD spans 5296–5408; it reads AVGACVLCNS…TDFNAIATCD (113 aa). Positions 5300, 5303, 5311, 5314, 5321, 5324, 5328, 5334, 5345, 5350, 5367, and 5370 each coordinate Zn(2+). A (+)RNA virus helicase ATP-binding domain is found at 5552–5733; sequence NISNEFSSNV…MKTIGPDMFL (182 aa). Position 5577 to 5584 (5577 to 5584) interacts with ATP; it reads GPPGTGKS. Residues 5734–5903 form the (+)RNA virus helicase C-terminal domain; sequence GTCRRCPAEI…TLQAENVTGL (170 aa). In terms of domain architecture, ExoN spans 5968-6183; it reads MFITREEAIR…RCLAVHECFV (216 aa). Catalysis depends on residues D5986, E5988, and E6087. Residues C6103, C6106, C6122, H6125, H6153, C6157, and H6160 each contribute to the Zn(2+) site. Residues H6164 and D6169 contribute to the active site. C6175 is a binding site for Zn(2+). Residues 6192-6423 form the N7-MTase domain; that stretch reads YPIIGDELKI…NLWNTFTKLQ (232 aa). Residue 6227 to 6233 coordinates S-adenosyl-L-methionine; sequence DIGNPKA. Positions 6310 to 6324 are gpppA-binding; sequence CDGGSLYVNKHAFHT. Positions 6348, 6369, 6380, and 6383 each coordinate Zn(2+). Residues 6424-6484 enclose the Nsp15 N-terminal oligomerization domain; that stretch reads SLENVAYNVV…NVAFELWAKR (61 aa). One can recognise an AV-Nsp11N/CoV-Nsp15M domain in the interval 6485–6610; the sequence is NIKPVPEIKI…YFKKVDGIIQ (126 aa). Residues 6627–6766 enclose the NendoU domain; it reads KPRSQMETDF…KDGHVETFYP (140 aa). Residues H6657, H6672, K6712, K6815, D6899, K6939, and E6972 contribute to the active site. Residues 6771–7065 form the Nidovirus-type SAM-dependent 2'-O-MTase domain; sequence SQAWQPGVAM…RVVVSSDILV (295 aa).

The protein belongs to the coronaviruses polyprotein 1ab family. As to quaternary structure, interacts with host PHB and PHB2. In terms of assembly, interacts with papain-like protease nsp3 and non-structural protein 6. Monomer. Homodimer. Only the homodimer shows catalytic activity. As to quaternary structure, interacts with nsp8 and nsp12 to form the replication-transcription complex (RTC): nsp12, nsp7, two subunits of nsp8, and up to two subunits of nsp13. In terms of assembly, interacts with nsp7, nsp13 and nsp12 to form the replication-transcription complex (RTC): nsp12, nsp7, two subunits of nsp8, and up to two subunits of nsp13. Interacts with nsp12. As to quaternary structure, interacts with proofreading exoribonuclease nsp14 and 2'-O-methyltransferase nsp16; these interactions enhance nsp14 and nsp16 enzymatic activities. In terms of assembly, interacts with nsp7 and nsp8 to form the replication-transcription complex (RTC): nsp12, nsp7, two subunits of nsp8, and up to two subunits of nsp13. Interacts with nsp9. Interacts with nsp8 to form the replication-transcription complex (RTC): nsp12, nsp7, two subunits of nsp8, and up to two subunits of nsp13. Mn(2+) is required as a cofactor. Requires Mg(2+) as cofactor. Post-translationally, specific enzymatic cleavages in vivo by its own proteases yield mature proteins. 3CL-PRO and PL-PRO proteinases are autocatalytically processed.

The protein resides in the host membrane. It is found in the host cytoplasm. Its subcellular location is the host perinuclear region. The protein localises to the host endoplasmic reticulum-Golgi intermediate compartment. The enzyme catalyses RNA(n) + a ribonucleoside 5'-triphosphate = RNA(n+1) + diphosphate. The catalysed reaction is ATP + H2O = ADP + phosphate + H(+). It catalyses the reaction Thiol-dependent hydrolysis of ester, thioester, amide, peptide and isopeptide bonds formed by the C-terminal Gly of ubiquitin (a 76-residue protein attached to proteins as an intracellular targeting signal).. It carries out the reaction a 5'-end (N(7)-methyl 5'-triphosphoguanosine)-ribonucleoside in mRNA + S-adenosyl-L-methionine = a 5'-end (N(7)-methyl 5'-triphosphoguanosine)-(2'-O-methyl-ribonucleoside) in mRNA + S-adenosyl-L-homocysteine + H(+). The enzyme catalyses uridylyl-uridylyl-ribonucleotide-RNA = a 3'-end uridylyl-2',3'-cyclophospho-uridine-RNA + a 5'-end dephospho-ribonucleoside-RNA. The catalysed reaction is a 5'-end diphospho-ribonucleoside in mRNA + GTP + H(+) = a 5'-end (5'-triphosphoguanosine)-ribonucleoside in mRNA + diphosphate. It catalyses the reaction a 5'-end (5'-triphosphoguanosine)-ribonucleoside in mRNA + S-adenosyl-L-methionine = a 5'-end (N(7)-methyl 5'-triphosphoguanosine)-ribonucleoside in mRNA + S-adenosyl-L-homocysteine. In terms of biological role, the replicase polyprotein of coronaviruses is a multifunctional protein: it contains the activities necessary for the transcription of negative stranded RNA, leader RNA, subgenomic mRNAs and progeny virion RNA as well as proteinases responsible for the cleavage of the polyprotein into functional products. Functionally, inhibits host translation by interacting with the 40S ribosomal subunit. The nsp1-40S ribosome complex further induces an endonucleolytic cleavage near the 5'UTR of host mRNAs, targeting them for degradation. Viral mRNAs are not susceptible to nsp1-mediated endonucleolytic RNA cleavage thanks to the presence of a 5'-end leader sequence and are therefore protected from degradation. By suppressing host gene expression, nsp1 facilitates efficient viral gene expression in infected cells and evasion from host immune response. Its function is as follows. May play a role in the modulation of host cell survival signaling pathway by interacting with host PHB and PHB2. Indeed, these two proteins play a role in maintaining the functional integrity of the mitochondria and protecting cells from various stresses. Responsible for the cleavages located at the N-terminus of the replicase polyprotein. In addition, PL-PRO possesses a deubiquitinating/deISGylating activity and processes both 'Lys-48'- and 'Lys-63'-linked polyubiquitin chains from cellular substrates. Participates together with nsp4 in the assembly of virally-induced cytoplasmic double-membrane vesicles necessary for viral replication. Antagonizes innate immune induction of type I interferon by blocking the phosphorylation, dimerization and subsequent nuclear translocation of host IRF3. Also prevents host NF-kappa-B signaling. In terms of biological role, participates in the assembly of virally-induced cytoplasmic double-membrane vesicles necessary for viral replication. Functionally, cleaves the C-terminus of replicase polyprotein at 11 sites. Recognizes substrates containing the core sequence [ILMVF]-Q-|-[SGACN]. Also able to bind an ADP-ribose-1''-phosphate (ADRP). Its function is as follows. Plays a role in the initial induction of autophagosomes from host endoplasmic reticulum. Later, limits the expansion of these phagosomes that are no longer able to deliver viral components to lysosomes. Forms a hexadecamer with nsp8 (8 subunits of each) that may participate in viral replication by acting as a primase. Alternatively, may synthesize substantially longer products than oligonucleotide primers. In terms of biological role, forms a hexadecamer with nsp7 (8 subunits of each) that may participate in viral replication by acting as a primase. Alternatively, may synthesize substantially longer products than oligonucleotide primers. Functionally, forms a primer, NSP9-pU, which is utilized by the polymerase for the initiation of RNA chains. Interacts with ribosome signal recognition particle RNA (SRP). Together with NSP8, suppress protein integration into the cell membrane, thereby disrupting host immune defenses. Its function is as follows. Plays a pivotal role in viral transcription by stimulating both nsp14 3'-5' exoribonuclease and nsp16 2'-O-methyltransferase activities. Therefore plays an essential role in viral mRNAs cap methylation. RNA-directed RNA polymerase that catalyzes the transcription of viral genomic and subgenomic RNAs. Acts in complex with nsp7 and nsp8 to transcribe both the minus and positive strands of genomic RNA. The kinase-like NiRAN domain of NSP12 attaches one or more nucleotides to the amino terminus of NSP9, forming a covalent RNA-protein intermediate that serves as transcription/replication primer. Subgenomic RNAs (sgRNAs) are formed by discontinuous transcription: The polymerase has the ability to pause at transcription-regulating sequences (TRS) and jump to the leader TRS, resulting in a major deletion. This creates a series of subgenomic RNAs that are replicated, transcribed and translated. In addition, Nsp12 is a subunit of the viral RNA capping enzyme that catalyzes the RNA guanylyltransferase reaction for genomic and sub-genomic RNAs. Subsequently, the NiRAN domain transfers RNA to GDP, and forms the core cap structure GpppA-RNA. In terms of biological role, multi-functional protein with a zinc-binding domain in N-terminus displaying RNA and DNA duplex-unwinding activities with 5' to 3' polarity. Activity of helicase is dependent on magnesium. Functionally, plays a role in viral RNA synthesis through two distinct activities. The N7-guanine methyltransferase activity plays a role in the formation of the cap structure GpppA-RNA. The proofreading exoribonuclease reduces the sensitivity of the virus to RNA mutagens during replication. This activity acts on both ssRNA and dsRNA in a 3'-5' direction. Its function is as follows. Plays a role in viral transcription/replication and prevents the simultaneous activation of host cell dsRNA sensors, such as MDA5/IFIH1, OAS, and PKR. Acts by degrading the 5'-polyuridines generated during replication of the poly(A) region of viral genomic and subgenomic RNAs. Catalyzes a two-step reaction in which a 2'3'-cyclic phosphate (2'3'-cP) is first generated by 2'-O transesterification, which is then hydrolyzed to a 3'-phosphate (3'-P). If not degraded, poly(U) RNA would hybridize with poly(A) RNA tails and activate host dsRNA sensors. Methyltransferase that mediates mRNA cap 2'-O-ribose methylation to the 5'-cap structure of viral mRNAs. N7-methyl guanosine cap is a prerequisite for binding of nsp16. Therefore plays an essential role in viral mRNAs cap methylation which is essential to evade immune system. This is Replicase polyprotein 1ab (rep) from Bat coronavirus HKU3 (BtCoV).